The following is a 165-amino-acid chain: Nucleotide-binding protein PMM0481 (165 aa).

Belongs to the YajQ family.

Nucleotide-binding protein. The polypeptide is Nucleotide-binding protein PMM0481 (Prochlorococcus marinus subsp. pastoris (strain CCMP1986 / NIES-2087 / MED4)).